A 524-amino-acid chain; its full sequence is Citrate exporter 1 (524 aa).

The tract at residues 1–49 (MSSTTSSSRSDLEKVPVPQVTPRDSDSDKGSLSPEPSTLEAQSSEKPPH) is disordered. Residues 34–45 (PEPSTLEAQSSE) show a composition bias toward polar residues. Residues 60 to 80 (MVCIVSLAAIFSPLSSNIYFP) traverse the membrane as a helical segment. Asn90 is a glycosylation site (N-linked (GlcNAc...) asparagine). 5 helical membrane-spanning segments follow: residues 95–115 (LATL…SFWG), 125–145 (PVFI…AESK), 155–175 (ALQA…IGDI), 186–206 (GIFG…GGIF), and 215–235 (IFWF…VLLP). N-linked (GlcNAc...) asparagine glycosylation is present at Asn244. 6 helical membrane passes run 296–316 (VFIT…VTSS), 332–352 (IGLT…LVGY), 395–415 (TWWV…SLRT), 417–437 (LAVP…LFTI), 459–479 (LMRC…LDAL), and 481–501 (PDYT…LLYV).

The protein belongs to the major facilitator superfamily.

Its subcellular location is the cell membrane. It catalyses the reaction citrate(in) = citrate(out). Transmembrane transporter that exports citrate across the cell membrane. This Aspergillus niger (strain ATCC 1015 / CBS 113.46 / FGSC A1144 / LSHB Ac4 / NCTC 3858a / NRRL 328 / USDA 3528.7) protein is Citrate exporter 1.